A 709-amino-acid chain; its full sequence is UvrABC system protein B (709 aa).

A Helicase ATP-binding domain is found at 35–416; sequence ERVEAGEKDV…YELGQADGYV (382 aa). 48–55 provides a ligand contact to ATP; it reads GATGTGKS. The Beta-hairpin signature appears at 101 to 124; that stretch reads YYDYYQPEAYVPQTDTFIEKDSSI. The 167-residue stretch at 438–604 folds into the Helicase C-terminal domain; that stretch reads QIDDLLEQIR…PLRKRIADIT (167 aa). Residues 666–701 enclose the UVR domain; sequence ADLIEQMSQQMHQAAADLQFELAARLRDEVGELKKE.

This sequence belongs to the UvrB family. Forms a heterotetramer with UvrA during the search for lesions. Interacts with UvrC in an incision complex.

It is found in the cytoplasm. The UvrABC repair system catalyzes the recognition and processing of DNA lesions. A damage recognition complex composed of 2 UvrA and 2 UvrB subunits scans DNA for abnormalities. Upon binding of the UvrA(2)B(2) complex to a putative damaged site, the DNA wraps around one UvrB monomer. DNA wrap is dependent on ATP binding by UvrB and probably causes local melting of the DNA helix, facilitating insertion of UvrB beta-hairpin between the DNA strands. Then UvrB probes one DNA strand for the presence of a lesion. If a lesion is found the UvrA subunits dissociate and the UvrB-DNA preincision complex is formed. This complex is subsequently bound by UvrC and the second UvrB is released. If no lesion is found, the DNA wraps around the other UvrB subunit that will check the other stand for damage. The sequence is that of UvrABC system protein B from Micrococcus luteus (strain ATCC 4698 / DSM 20030 / JCM 1464 / CCM 169 / CCUG 5858 / IAM 1056 / NBRC 3333 / NCIMB 9278 / NCTC 2665 / VKM Ac-2230) (Micrococcus lysodeikticus).